A 132-amino-acid chain; its full sequence is Translation initiation factor 5A (132 aa).

Residue lysine 36 is modified to Hypusine.

Belongs to the eIF-5A family.

It localises to the cytoplasm. Its function is as follows. Functions by promoting the formation of the first peptide bond. The polypeptide is Translation initiation factor 5A (eIF5A) (Thermofilum pendens (strain DSM 2475 / Hrk 5)).